A 163-amino-acid chain; its full sequence is Phosphopantetheine adenylyltransferase (163 aa).

Substrate is bound at residue threonine 11. ATP is bound by residues 11–12 and histidine 19; that span reads TF. Lysine 43, leucine 75, and arginine 89 together coordinate substrate. Residues 90-92, glutamate 100, and 125-131 each bind ATP; these read GLR and YMFISAT.

It belongs to the bacterial CoaD family. Homohexamer. It depends on Mg(2+) as a cofactor.

The protein localises to the cytoplasm. It catalyses the reaction (R)-4'-phosphopantetheine + ATP + H(+) = 3'-dephospho-CoA + diphosphate. The protein operates within cofactor biosynthesis; coenzyme A biosynthesis; CoA from (R)-pantothenate: step 4/5. Functionally, reversibly transfers an adenylyl group from ATP to 4'-phosphopantetheine, yielding dephospho-CoA (dPCoA) and pyrophosphate. The sequence is that of Phosphopantetheine adenylyltransferase from Azoarcus sp. (strain BH72).